Consider the following 228-residue polypeptide: L-ribulose-5-phosphate 4-epimerase UlaF (228 aa).

Substrate-binding positions include 26–27 (GN), 43–44 (SG), and 72–73 (SS). Aspartate 74, histidine 93, and histidine 95 together coordinate Zn(2+). Aspartate 118 acts as the Proton donor/acceptor in catalysis. Histidine 167 is a Zn(2+) binding site. Catalysis depends on tyrosine 225, which acts as the Proton donor/acceptor.

It belongs to the aldolase class II family. AraD/FucA subfamily. Zn(2+) is required as a cofactor.

It catalyses the reaction L-ribulose 5-phosphate = D-xylulose 5-phosphate. It participates in cofactor degradation; L-ascorbate degradation; D-xylulose 5-phosphate from L-ascorbate: step 4/4. Its function is as follows. Catalyzes the isomerization of L-ribulose 5-phosphate to D-xylulose 5-phosphate. Is involved in the anaerobic L-ascorbate utilization. This Shigella boydii serotype 18 (strain CDC 3083-94 / BS512) protein is L-ribulose-5-phosphate 4-epimerase UlaF.